We begin with the raw amino-acid sequence, 410 residues long: F-box/WD-40 repeat-containing protein 1 (410 aa).

The 48-residue stretch at 32-79 (SKECSLLPFELFEEILCRVPTKSLLRLKLTCKRWLALFNDKRFIYKHL) folds into the F-box domain. WD repeat units lie at residues 109-150 (PNKF…VRWI) and 269-309 (DVHN…NGVS).

The protein is F-box/WD-40 repeat-containing protein 1 (FBW1) of Arabidopsis thaliana (Mouse-ear cress).